A 445-amino-acid polypeptide reads, in one-letter code: V-type proton ATPase subunit H (445 aa).

It belongs to the V-ATPase H subunit family. As to quaternary structure, V-ATPase is a heteromultimeric enzyme composed of a peripheral catalytic V1 complex (components A to H) attached to an integral membrane V0 proton pore complex (components: a, c, c', c'' and d).

Functionally, subunit of the peripheral V1 complex of vacuolar ATPase. Subunit H activates the ATPase activity of the enzyme and couples ATPase activity to proton flow. Vacuolar ATPase is responsible for acidifying a variety of intracellular compartments in eukaryotic cells, thus providing most of the energy required for transport processes in the vacuolar system. This is V-type proton ATPase subunit H (vatH) from Dictyostelium discoideum (Social amoeba).